The following is a 269-amino-acid chain: JmjC domain-containing protein 8 (269 aa).

An N-terminal signal peptide occupies residues 1-24; sequence MAAAGRFGLLLLIVLWTMVTVVLP. N-linked (GlcNAc...) asparagine glycosylation is found at Asn135, Asn145, and Asn214. The region spanning 147-269 is the JmjC domain; it reads TEWAPLFQHY…TSVFISTFLG (123 aa).

Oligomer. Dimer. Interacts with PKM; regulates angiogenesis and metabolism. In terms of processing, N-glycosylated.

It localises to the endoplasmic reticulum lumen. The protein localises to the cytoplasm. In terms of biological role, functions as a positive regulator of TNF-induced NF-kappaB signaling. Regulates angiogenesis and cellular metabolism through interaction with PKM. The chain is JmjC domain-containing protein 8 from Rattus norvegicus (Rat).